The following is a 750-amino-acid chain: Photosystem I P700 chlorophyll a apoprotein A1 (750 aa).

Helical transmembrane passes span 70-93 (VFSA…FHGA), 156-179 (LYCT…FHYH), 195-219 (LNHH…HVSL), 291-309 (IAHH…GHMY), 346-369 (WHAQ…HHMY), 385-411 (LSLF…IFMV), 433-455 (AIIS…LYIH), and 531-549 (FLVH…LILL). [4Fe-4S] cluster-binding residues include Cys-573 and Cys-582. The next 2 membrane-spanning stretches (helical) occupy residues 589-610 (HVFL…HFSW) and 664-686 (LSAY…MFLF). His-675 serves as a coordination point for chlorophyll a'. 2 residues coordinate chlorophyll a: Met-683 and Tyr-691. A phylloquinone-binding site is contributed by Trp-692. The helical transmembrane segment at 724 to 744 (AVGVTHYLLGGIATTWAFFLA) threads the bilayer.

It belongs to the PsaA/PsaB family. In terms of assembly, the PsaA/B heterodimer binds the P700 chlorophyll special pair and subsequent electron acceptors. PSI consists of a core antenna complex that captures photons, and an electron transfer chain that converts photonic excitation into a charge separation. The eukaryotic PSI reaction center is composed of at least 11 subunits. P700 is a chlorophyll a/chlorophyll a' dimer, A0 is one or more chlorophyll a, A1 is one or both phylloquinones and FX is a shared 4Fe-4S iron-sulfur center. serves as cofactor.

The protein resides in the plastid. The protein localises to the chloroplast thylakoid membrane. The enzyme catalyses reduced [plastocyanin] + hnu + oxidized [2Fe-2S]-[ferredoxin] = oxidized [plastocyanin] + reduced [2Fe-2S]-[ferredoxin]. In terms of biological role, psaA and PsaB bind P700, the primary electron donor of photosystem I (PSI), as well as the electron acceptors A0, A1 and FX. PSI is a plastocyanin-ferredoxin oxidoreductase, converting photonic excitation into a charge separation, which transfers an electron from the donor P700 chlorophyll pair to the spectroscopically characterized acceptors A0, A1, FX, FA and FB in turn. Oxidized P700 is reduced on the lumenal side of the thylakoid membrane by plastocyanin. In Nymphaea alba (White water-lily), this protein is Photosystem I P700 chlorophyll a apoprotein A1.